Consider the following 360-residue polypeptide: Codeine O-demethylase (360 aa).

The region spanning 211–311 (GLQTMRMNYY…RLSIATFHDS (101 aa)) is the Fe2OG dioxygenase domain. Tyr-220 is a binding site for 2-oxoglutarate. Fe cation is bound by residues His-235, Asp-237, and His-292. The 2-oxoglutarate site is built by Arg-302 and Ser-304.

The protein belongs to the iron/ascorbate-dependent oxidoreductase family. L-ascorbate serves as cofactor. It depends on Fe cation as a cofactor. Mainly expressed in stems, capsules and leaves and, to a lower extent, in roots.

It carries out the reaction codeine + 2-oxoglutarate + O2 = morphine + formaldehyde + succinate + CO2. The catalysed reaction is thebaine + 2-oxoglutarate + O2 = oripavine + formaldehyde + succinate + CO2. The enzyme catalyses (S)-scoulerine + 2-oxoglutarate + O2 = (S)-3-O-demethylscoulerine + formaldehyde + succinate + CO2. It catalyses the reaction thebaine + 2-oxoglutarate + O2 = neopinone + formaldehyde + succinate + CO2. It carries out the reaction (S)-reticuline + 2-oxoglutarate + O2 = (S)-6-O-demethylreticuline + formaldehyde + succinate + CO2. The catalysed reaction is (S)-tetrahydropalmatine + S-adenosyl-L-methionine = (S)-cis-N-methyltetrahydropalmatine + S-adenosyl-L-homocysteine. It functions in the pathway alkaloid biosynthesis; morphine biosynthesis. Its activity is regulated as follows. Moderate substrate inhibition. Not inhibited in vitro by acylcyclohexanediones. Its function is as follows. Non-heme dioxygenase involved in biosynthesis of morphinan-type benzylisoquinoline and opiate alkaloids natural products. Mediates the conversion of codeine to morphine. Also catalyzes, with lower efficiency, the 3-O-demethylation of thebaine to oripavine and of (S)-scoulerine to 3-O-demethylscoulerine. Supports, with a lower turnover, the conversion of codeinone to morphinone, of thebaine to neopinone, and of neopine to neomorphine. Supports dealkylation reactions such as O,O-demethylenation in the metabolism of protopine, benzo[c]phenanthridine, and rhoeadine alkaloids; cleaves a methylenedioxy bridge leaving two hydroxyl groups. Catalyzes the O,O-demethylenation of methylenedioxy bridges on protopine alkaloids such as allocryptopine, cryptopine and protopine. No activity with (S)-reticuline, salutaridine, papaverine, (S)-corytuberine, oripavine, pavine or noscapine. The polypeptide is Codeine O-demethylase (Papaver somniferum (Opium poppy)).